We begin with the raw amino-acid sequence, 73 residues long: Kazal peptide Pr13a (73 aa).

A signal peptide spans 1 to 20; sequence MKYIILFLVLIGLQANLALG. The region spanning 21 to 73 is the Kazal-like domain; sequence SKCKCDCTKYPYSPVCAKELKTGDTETFNNVCQLQCYNCTHMKNYVVIYSGSC. Cystine bridges form between cysteine 23–cysteine 59, cysteine 27–cysteine 52, and cysteine 36–cysteine 73.

Expressed by the venom gland (anterior main gland) (at protein level).

Its subcellular location is the secreted. Its function is as follows. May act as a serine protease inhibitor, since it possess the kazal serine protease inhibitor signature. This chain is Kazal peptide Pr13a, found in Platymeris rhadamanthus (Red spot assassin bug).